We begin with the raw amino-acid sequence, 270 residues long: MGNKLVLVLVAVALVMGPKNVSAQNCGCAEGLCCSQYGYCGTGEDYCGTGCQQGPCTTASPPPSNNVNADILTADFLNGIIDQADSGCAGKNFYTRDAFLSALNSYTDFGRVGSEDDSKREIAAAFAHFTHETGHFCYIEEIDGASKDYCDEESIAQYPCSSSKGYHGRGPIQLSWNFNYGPAGSANNFDGLGAPETVSNDVVVSFKTALWYWMQHVRPVINQGFGATIRAINGALECDGANPTTVQARVNYYTEYCRQLGVATGDNLTC.

A signal peptide spans 1-23 (MGNKLVLVLVAVALVMGPKNVSA). The Chitin-binding type-1 domain occupies 24 to 58 (QNCGCAEGLCCSQYGYCGTGEDYCGTGCQQGPCTT). 7 disulfides stabilise this stretch: cysteine 26–cysteine 34, cysteine 28–cysteine 40, cysteine 33–cysteine 47, cysteine 51–cysteine 56, cysteine 88–cysteine 137, cysteine 150–cysteine 160, and cysteine 238–cysteine 270. Glutamate 132 (proton donor) is an active-site residue.

Belongs to the glycosyl hydrolase 19 family. Chitinase class I subfamily.

The catalysed reaction is Random endo-hydrolysis of N-acetyl-beta-D-glucosaminide (1-&gt;4)-beta-linkages in chitin and chitodextrins.. In terms of biological role, defense against chitin-containing fungal pathogens. This chain is Endochitinase PR4 (CHI4), found in Phaseolus vulgaris (Kidney bean).